Consider the following 524-residue polypeptide: Acetyl-CoA hydrolase (524 aa).

275–279 (GIGNI) serves as a coordination point for CoA. Glu-300 functions as the 5-glutamyl coenzyme A thioester intermediate in the catalytic mechanism. CoA is bound by residues Asn-390 and Gly-394.

Belongs to the acetyl-CoA hydrolase/transferase family.

The protein resides in the cytoplasm. It catalyses the reaction acetyl-CoA + H2O = acetate + CoA + H(+). Presumably involved in regulating the intracellular acetyl-CoA pool for fatty acid and cholesterol synthesis and fatty acid oxidation. This is Acetyl-CoA hydrolase (ACH1) from Candida albicans (strain SC5314 / ATCC MYA-2876) (Yeast).